A 343-amino-acid chain; its full sequence is Probable siderophore transport system permease protein YfhA (343 aa).

9 helical membrane passes run 15–35 (WIVF…SAGL), 69–89 (ILTA…LQGL), 97–117 (PDII…MMFF), 130–150 (WLPA…YLLA), 160–180 (LVLI…LLMI), 204–224 (QHVK…FVAL), 249–269 (FFLL…AGTI), 289–309 (GALL…ADIV), and 317–337 (VEVP…IYLL).

The protein belongs to the binding-protein-dependent transport system permease family. FecCD subfamily. The complex is composed of one ATP-binding protein (YusV), two transmembrane proteins (YfiZ and YfhA) and a solute-binding protein (YfiY).

The protein resides in the cell membrane. In terms of biological role, part of the ABC transporter complex YfiYZ/YfhA/YusV involved in import of the iron-hydroxamate siderophores schizokinen, arthrobactin and corprogen. The protein is Probable siderophore transport system permease protein YfhA (yfhA) of Bacillus subtilis (strain 168).